A 1004-amino-acid chain; its full sequence is Receptor-type tyrosine-protein phosphatase N2 (1004 aa).

The N-terminal stretch at 1–27 is a signal peptide; sequence MGLPLPLLLLLLLPPPLPRALPAPASA. An involved in localization to secretory granules; interaction with CPE region spans residues 1 to 409; the sequence is MGLPLPLLLL…PEAPLLEKSS (409 aa). At 28 to 603 the chain is on the extracellular side; that stretch reads RGRQLPGRLG…HPEEQEDSTK (576 aa). At Arg259 the chain carries Omega-N-methylarginine. Disordered regions lie at residues 274 to 294, 333 to 360, and 393 to 459; these read APAL…SLSM, QSDP…DAPE, and DHGS…WRLE. Ser340 carries the phosphoserine modification. 2 stretches are compositionally biased toward basic and acidic residues: residues 341 to 356 and 407 to 418; these read QESH…REQA and KSSRAEMKKSEQ. Over residues 419–430 the composition is skewed to acidic residues; the sequence is PEEVLSSEEETA. Ser424 and Ser425 each carry phosphoserine. A compositionally biased stretch (basic and acidic residues) spans 431 to 450; it reads GVEHVKSRTYSKDLLERKPN. An N-linked (GlcNAc...) asparagine glycan is attached at Asn553. Residues 604–624 traverse the membrane as a helical segment; it reads FIVLTFLSIACILAVLLASSL. Over 625 to 1004 the chain is Cytoplasmic; it reads AYCLRHNSHY…VNAILKALPQ (380 aa). The Tyrosine-based internalization motif signature appears at 655–664; sequence YQELCRQRMA. A disordered region spans residues 665-710; that stretch reads VRPQDHSEGPHTSRINSVSSQLSDGPMPSPSARSSTSSWSEEPAQS. Polar residues predominate over residues 677 to 687; sequence SRINSVSSQLS. Residue Ser681 is modified to Phosphoserine; by PKA. Residue Ser687 is modified to Phosphoserine. A compositionally biased stretch (low complexity) spans 694 to 710; it reads PSARSSTSSWSEEPAQS. Position 700 is a phosphothreonine; by PKA (Thr700). The Tyrosine-protein phosphatase domain maps to 734–994; it reads LEKEWEALCA…EFALTAVAEE (261 aa). Residues Asp902 and 934 to 940 each bind substrate; that span reads CSDGAGR. The Phosphocysteine intermediate role is filled by Cys934. At Lys959 the chain carries N6-acetyllysine. Gln979 is a substrate binding site. The short motif at 993–999 is the Leucine-based sorting signal element; the sequence is EEVNAIL.

The protein belongs to the protein-tyrosine phosphatase family. Receptor class 8 subfamily. As to quaternary structure, self-associates. Interacts (via cytoplasmic domain) with PTPRN (via cytoplasmic domain). Interacts (precursor form) with CPE. Interacts with HAP1. Interacts with AP2A1 or AP2A2 and AP1G1; indicative for an association with adaptor protein complex 2 (AP-2) and adaptor protein complex 1 (AP-1). Interacts with AP2M1; indicative for an association with adaptor protein complex 2 (AP-2). Interacts with MYO5A. In terms of processing, subject to proteolytic cleavage at multiple sites.

Its subcellular location is the cytoplasmic vesicle. The protein localises to the secretory vesicle membrane. The protein resides in the secretory vesicle. It is found in the synaptic vesicle membrane. The enzyme catalyses O-phospho-L-tyrosyl-[protein] + H2O = L-tyrosyl-[protein] + phosphate. Functionally, plays a role in vesicle-mediated secretory processes. Required for normal accumulation of secretory vesicles in hippocampus, pituitary and pancreatic islets. Required for the accumulation of normal levels of insulin-containing vesicles and preventing their degradation. Plays a role in insulin secretion in response to glucose stimuli. Required for normal accumulation of the neurotransmitters norepinephrine, dopamine and serotonin in the brain. In females, but not in males, required for normal accumulation and secretion of pituitary hormones, such as luteinizing hormone (LH) and follicle-stimulating hormone (FSH). Required to maintain normal levels of renin expression and renin release. May regulate catalytic active protein-tyrosine phosphatases such as PTPRA through dimerization. Has phosphatidylinositol phosphatase activity; the PIPase activity is involved in its ability to regulate insulin secretion. Can dephosphorylate phosphatidylinositol 4,5-biphosphate, phosphatidylinositol 5-phosphate and phosphatidylinositol 3-phosphate. Regulates PI(4,5)P2 level in the plasma membrane and localization of cofilin at the plasma membrane and thus is indirectly involved in regulation of actin dynamics related to cell migration and metastasis; upon hydrolysis of PI(4,5)P2 cofilin is released from the plasma membrane and acts in the cytoplasm in severing F-actin filaments. The sequence is that of Receptor-type tyrosine-protein phosphatase N2 (Ptprn2) from Rattus norvegicus (Rat).